Reading from the N-terminus, the 208-residue chain is N-(5'-phosphoribosyl)anthranilate isomerase (208 aa).

Belongs to the TrpF family.

It carries out the reaction N-(5-phospho-beta-D-ribosyl)anthranilate = 1-(2-carboxyphenylamino)-1-deoxy-D-ribulose 5-phosphate. It functions in the pathway amino-acid biosynthesis; L-tryptophan biosynthesis; L-tryptophan from chorismate: step 3/5. The sequence is that of N-(5'-phosphoribosyl)anthranilate isomerase from Methanococcus maripaludis (strain C7 / ATCC BAA-1331).